The chain runs to 890 residues: DNA mismatch repair protein MutS (890 aa).

645–652 (GPNMAGKS) is an ATP binding site.

It belongs to the DNA mismatch repair MutS family.

Functionally, this protein is involved in the repair of mismatches in DNA. It is possible that it carries out the mismatch recognition step. This protein has a weak ATPase activity. In Rickettsia rickettsii (strain Iowa), this protein is DNA mismatch repair protein MutS.